We begin with the raw amino-acid sequence, 433 residues long: Probable M18 family aminopeptidase 2 (433 aa).

Zn(2+)-binding residues include H84, H161, and H409.

Belongs to the peptidase M18 family. The cofactor is Zn(2+).

The polypeptide is Probable M18 family aminopeptidase 2 (Clostridium novyi (strain NT)).